Consider the following 479-residue polypeptide: GTPase Obg (479 aa).

An Obg domain is found at P2–V159. The 181-residue stretch at A160–S340 folds into the OBG-type G domain. GTP-binding positions include G166 to S173, F191 to V195, D212 to G215, N292 to D295, and S321 to V323. Positions 173 and 193 each coordinate Mg(2+). The region spanning P358 to P436 is the OCT domain. The segment at T438–D479 is disordered. Residues T451–K467 show a composition bias toward basic and acidic residues.

The protein belongs to the TRAFAC class OBG-HflX-like GTPase superfamily. OBG GTPase family. In terms of assembly, monomer. It depends on Mg(2+) as a cofactor.

The protein resides in the cytoplasm. Functionally, an essential GTPase which binds GTP, GDP and possibly (p)ppGpp with moderate affinity, with high nucleotide exchange rates and a fairly low GTP hydrolysis rate. Plays a role in control of the cell cycle, stress response, ribosome biogenesis and in those bacteria that undergo differentiation, in morphogenesis control. The protein is GTPase Obg of Mycobacterium marinum (strain ATCC BAA-535 / M).